The chain runs to 226 residues: ATP-dependent dethiobiotin synthetase BioD (226 aa).

12–17 (GIGKTV) lines the ATP pocket. Thr16 contributes to the Mg(2+) binding site. Lys37 is an active-site residue. Substrate is bound at residue Thr41. ATP is bound by residues Asp49, 108-111 (EGAG), and 197-199 (PAG). 2 residues coordinate Mg(2+): Asp49 and Glu108.

It belongs to the dethiobiotin synthetase family. As to quaternary structure, homodimer. The cofactor is Mg(2+).

Its subcellular location is the cytoplasm. The enzyme catalyses (7R,8S)-7,8-diammoniononanoate + CO2 + ATP = (4R,5S)-dethiobiotin + ADP + phosphate + 3 H(+). It participates in cofactor biosynthesis; biotin biosynthesis; biotin from 7,8-diaminononanoate: step 1/2. Its function is as follows. Catalyzes a mechanistically unusual reaction, the ATP-dependent insertion of CO2 between the N7 and N8 nitrogen atoms of 7,8-diaminopelargonic acid (DAPA, also called 7,8-diammoniononanoate) to form a ureido ring. In Mycolicibacterium vanbaalenii (strain DSM 7251 / JCM 13017 / BCRC 16820 / KCTC 9966 / NRRL B-24157 / PYR-1) (Mycobacterium vanbaalenii), this protein is ATP-dependent dethiobiotin synthetase BioD.